The following is a 283-amino-acid chain: Pantothenate synthetase (283 aa).

31 to 38 lines the ATP pocket; the sequence is MGALHDGH. Residue His-38 is the Proton donor of the active site. Gln-62 contributes to the (R)-pantoate binding site. Beta-alanine is bound at residue Gln-62. 148-151 contributes to the ATP binding site; that stretch reads GKKD. Gln-154 contacts (R)-pantoate. Residues Val-177 and 185 to 188 contribute to the ATP site; that span reads KSSR.

Belongs to the pantothenate synthetase family. As to quaternary structure, homodimer.

The protein localises to the cytoplasm. The enzyme catalyses (R)-pantoate + beta-alanine + ATP = (R)-pantothenate + AMP + diphosphate + H(+). It functions in the pathway cofactor biosynthesis; (R)-pantothenate biosynthesis; (R)-pantothenate from (R)-pantoate and beta-alanine: step 1/1. Its function is as follows. Catalyzes the condensation of pantoate with beta-alanine in an ATP-dependent reaction via a pantoyl-adenylate intermediate. The chain is Pantothenate synthetase from Staphylococcus aureus (strain MSSA476).